Consider the following 185-residue polypeptide: Ribosome-recycling factor (185 aa).

Belongs to the RRF family.

It localises to the cytoplasm. Responsible for the release of ribosomes from messenger RNA at the termination of protein biosynthesis. May increase the efficiency of translation by recycling ribosomes from one round of translation to another. The sequence is that of Ribosome-recycling factor from Erwinia tasmaniensis (strain DSM 17950 / CFBP 7177 / CIP 109463 / NCPPB 4357 / Et1/99).